Here is a 397-residue protein sequence, read N- to C-terminus: Methyltransferase/ribosomally synthesized type I borosin cyclic peptide precursor mroMa1 (397 aa).

The tract at residues 1–246 is methyltransferase domain; sequence MALKKPGSLT…TTSTFYVPPR (246 aa). Catalysis depends on residues Arg-70, Tyr-74, and Tyr-96. Tyr-96, His-98, Val-101, Ala-128, Gln-170, Gly-208, Ser-239, and Thr-240 together coordinate S-adenosyl-L-methionine. The segment at 247–365 is clasp domain; that stretch reads TPAPIDPKAV…GPIFVVMRQL (119 aa). Residues 366-388 are precursor leader; it reads PSAIASGQEPSQEEIARADDATA. An N-methylisoleucine mark is found at Ile-391 and Ile-392. An N-methyltyrosine modification is found at Tyr-393. Ile-394 is modified (N-methylisoleucine). Position 395 is an N-methylvaline (Val-395).

It in the N-terminal section; belongs to the precorrin methyltransferase family. In terms of assembly, homodimer. Post-translationally, mroMA automethylates at Ile-391, Ile-392, Tyr-393, Ile-394 and Val-395 before being processed by the a prolyloligopeptidase which likely forms a peptidyl ester upon removal of the follower propeptide, which then undergoes macrocyclization with the N-terminus of the modified core peptide. Peptide backbone alpha-N-methylations change the physicochemical properties of amide bonds to provide structural constraints and other favorable characteristics including biological membrane permeability to peptides.

The protein operates within secondary metabolite biosynthesis. Functionally, fusion protein of the methyltransferase mroM1 and a type I borosin core peptide; part of the gene cluster that mediates the biosynthesis of a type I borosin, a highly methylated cyclic peptide with potent biological activities. Type I borosins derive from the C-terminus of the fusion protein, and it is the same protein that methylates its own C-terminus using S-adenosyl methionine (SAM). The C-terminus is subsequently cleaved off and macrocyclized by a prolyloligopeptidase to give the final product. In Mycena rosella (Pink bonnet), this protein is Methyltransferase/ribosomally synthesized type I borosin cyclic peptide precursor mroMa1.